The chain runs to 38 residues: Small toxic protein BsrG (38 aa).

The helical transmembrane segment at Ile-11–Val-31 threads the bilayer.

The protein resides in the cell membrane. Functionally, toxic component of a type I toxin-antitoxin (TA) system; expression in the absence of cognate antisense antitoxin SR4 RNA leads to cell lysis. Induced expression causes membrane invaginations that dislocate the cell wall synthesis machinery, leading to eventual death. Unlike many type I TA systems it does not form pores. Base pairing occurs between the 3' UTRs of bsrG mRNA and SR4 RNA, which leads to initiation of degradation by RNase III (rnc) followed by the action of RNase Y (rny) and RNase R (rnr). Not toxic when expressed in E.coli. When induced during logarithmic growth it only slowly exerts its toxic effect. Expression during log growth leads to significant disturbances of cell envelope biosynthesis and cell morphology, causing cell membrane invaginations and delocalization of cell division and cell wall synthesis machinery. Cell lysis depends on mreB, lytC and lytD, suggesting expression of bsrG triggers autolysis rather than disintegration of the membrane. Additionally expression of bsrG also inhibits transcription. The polypeptide is Small toxic protein BsrG (Bacillus subtilis (strain 168)).